The sequence spans 115 residues: Large ribosomal subunit protein uL22 (115 aa).

The protein belongs to the universal ribosomal protein uL22 family. Part of the 50S ribosomal subunit.

This protein binds specifically to 23S rRNA; its binding is stimulated by other ribosomal proteins, e.g. L4, L17, and L20. It is important during the early stages of 50S assembly. It makes multiple contacts with different domains of the 23S rRNA in the assembled 50S subunit and ribosome. Functionally, the globular domain of the protein is located near the polypeptide exit tunnel on the outside of the subunit, while an extended beta-hairpin is found that lines the wall of the exit tunnel in the center of the 70S ribosome. This chain is Large ribosomal subunit protein uL22, found in Lactiplantibacillus plantarum (strain ATCC BAA-793 / NCIMB 8826 / WCFS1) (Lactobacillus plantarum).